Consider the following 300-residue polypeptide: E3 ubiquitin-protein ligase RNF212B (300 aa).

Residues 6-40 form an RING-type zinc finger; it reads CNQCFRKDGAHFFVTSCGHIFCKKCVTLEKCAVCG. The stretch at 87–124 forms a coiled coil; the sequence is LLIAFYKHRITKLETAMQEAQQALVSQDKELSVLRKEN. The interval 141–232 is disordered; the sequence is YQGSRSITPR…SYRTSSASSG (92 aa). Positions 155 to 165 are enriched in polar residues; the sequence is TSPSQSVTPRP. Residues 166–182 are compositionally biased toward low complexity; sequence SFQHSSQVVSRSSSAES. Over residues 191 to 200 the composition is skewed to gly residues; that stretch reads GSLGQGGRGL. The segment covering 211 to 232 has biased composition (polar residues); it reads NETPSPASTHSLSYRTSSASSG.

In terms of assembly, homodimer. Post-translationally, autoubiquitinated.

The protein localises to the chromosome. The catalysed reaction is S-ubiquitinyl-[E2 ubiquitin-conjugating enzyme]-L-cysteine + [acceptor protein]-L-lysine = [E2 ubiquitin-conjugating enzyme]-L-cysteine + N(6)-ubiquitinyl-[acceptor protein]-L-lysine.. The protein operates within protein modification; protein ubiquitination. Functionally, ubiquitin E3 ligase that acts as a crucial factor for crossing-over (CO) formation during meiosis. Essential for normal prophase I progression and for ensuring appropriate CO designation in meiosis. Recruits key components of the cross-over machinery either directly ou indirectly, leading to the activation of the MutL-gamma complex. The function of RNF212B in CO designation is dependent on its catalytic activity. This is E3 ubiquitin-protein ligase RNF212B (RNF212B) from Homo sapiens (Human).